A 150-amino-acid polypeptide reads, in one-letter code: Nitric oxide reductase subunit C (150 aa).

Residues 13-29 (VFYGGSIFFILIFGALT) form a helical; Signal-anchor membrane-spanning segment. Heme c is bound by residues C62, C65, and H66.

Heterodimer of cytochromes b (large subunit) and c (small subunit).

The protein resides in the cell membrane. Component of the anaerobic respiratory chain that transforms nitrate to dinitrogen (denitrification). The chain is Nitric oxide reductase subunit C (norC) from Paracoccus denitrificans.